The sequence spans 123 residues: uncharacterized protein (123 aa).

To insertion element IS1016 transposase.

This is an uncharacterized protein from Haemophilus influenzae (strain ATCC 51907 / DSM 11121 / KW20 / Rd).